The chain runs to 267 residues: UDP-glucose:undecaprenyl-phosphate glucose-1-phosphate transferase (267 aa).

Residues 83–103 (VAAALLTALFAPLLLLAALAI) form a helical membrane-spanning segment.

This sequence belongs to the bacterial sugar transferase family.

It localises to the cell membrane. It catalyses the reaction di-trans,octa-cis-undecaprenyl phosphate + UDP-alpha-D-glucose = alpha-D-glucosyl di-trans,octa-cis-undecaprenyl diphosphate + UMP. Functionally, is likely the initiating enzyme for holdfast polysaccharide synthesis. Catalyzes the transfer of the glucose-1-phosphate moiety from UDP-Glc onto the carrier lipid undecaprenyl phosphate (C55-P), forming a phosphoanhydride bond yielding to glucosyl-pyrophosphoryl-undecaprenol (Glc-PP-C55). Also possesses a weak galactose-1-P transferase activity. This Caulobacter vibrioides (strain ATCC 19089 / CIP 103742 / CB 15) (Caulobacter crescentus) protein is UDP-glucose:undecaprenyl-phosphate glucose-1-phosphate transferase (pssY).